The following is a 149-amino-acid chain: Leghemoglobin (149 aa).

The 145-residue stretch at Ala-3 to Gly-147 folds into the Globin domain. Tyr-31 bears the Nitrated tyrosine mark. Ser-46 contributes to the heme b binding site. Residue Ser-46 is modified to Phosphoserine. His-62 contributes to the O2 binding site. Heme b contacts are provided by Lys-65, His-94, and Lys-97. Residue Tyr-135 is modified to Nitrated tyrosine.

The protein belongs to the plant globin family. Monomer. Nitrated in effective nodules and particularly in hypoxic conditions; this mechanism may play a protective role in the symbiosis by buffering toxic peroxynitrite NO(2)(-). Nitration level decrease during nodule senescence. In terms of processing, phosphorylation at Ser-46 disrupts the molecular environment of its porphyrin ring oxygen binding pocket, thus leading to a reduced oxygen consumption and to the delivery of oxygen O(2) to symbiosomes. As to expression, root nodules.

It is found in the cytoplasm. It localises to the cytosol. The protein localises to the nucleus. Its function is as follows. Leghemoglobin that reversibly binds oxygen O(2) through a pentacoordinated heme iron. In root nodules, facilitates the diffusion of oxygen to the bacteroids while preventing the bacterial nitrogenase from being inactivated by buffering dioxygen, nitric oxide and carbon monoxide, and promoting the formation of reactive oxygen species (ROS, e.g. H(2)O(2)). This role is essential for symbiotic nitrogen fixation (SNF). This Canavalia lineata (Beach bean) protein is Leghemoglobin.